Here is a 217-residue protein sequence, read N- to C-terminus: Phosphatidylcholine synthase (217 aa).

A helical transmembrane segment spans residues Ala1–Leu8. The Periplasmic segment spans residues Val9–Tyr16. Residues Ile17–Ala37 traverse the membrane as a helical segment. Residues Arg38–Asp50 lie on the Cytoplasmic side of the membrane. The helical transmembrane segment at Gly51–Leu71 threads the bilayer. At Leu72–Met77 the chain is on the periplasmic side. A helical transmembrane segment spans residues Leu78–Phe98. Residues Cys99–Asp107 are Cytoplasmic-facing. Residues His108 to Asn128 traverse the membrane as a helical segment. Residue Thr129 is a topological domain, periplasmic. The chain crosses the membrane as a helical span at residues Ser130 to Val149. At Lys150–Arg164 the chain is on the cytoplasmic side. The chain crosses the membrane as a helical span at residues Ile165 to Leu185. The Periplasmic portion of the chain corresponds to Ile186–Thr191. Residues Asn192–Tyr212 form a helical membrane-spanning segment. Over Arg213 to Pro217 the chain is Cytoplasmic.

This sequence belongs to the CDP-alcohol phosphatidyltransferase class-I family. It depends on Mn(2+) as a cofactor.

It is found in the cell inner membrane. It carries out the reaction a CDP-1,2-diacyl-sn-glycerol + choline = a 1,2-diacyl-sn-glycero-3-phosphocholine + CMP + H(+). Its function is as follows. Condenses choline with CDP-diglyceride to produce phosphatidylcholine and CMP. This is Phosphatidylcholine synthase from Legionella bozemanae (Fluoribacter bozemanae).